A 413-amino-acid polypeptide reads, in one-letter code: Eukaryotic initiation factor 4A-11 (413 aa).

A Q motif motif is present at residues 40-68 (ESFDAMGLQENLLRGIYAYGFEKPSAIQQ). The region spanning 71–241 (IVPFCKGLDV…RKFMNKPVRI (171 aa)) is the Helicase ATP-binding domain. An ATP-binding site is contributed by 84-91 (AQSGTGKT). The DEAD box signature appears at 189–192 (DEAD). Positions 252-413 (GIKQFYVNVD…ELPANVADLL (162 aa)) constitute a Helicase C-terminal domain.

This sequence belongs to the DEAD box helicase family. eIF4A subfamily. In terms of assembly, eIF4F is a multi-subunit complex, the composition of which varies with external and internal environmental conditions. It is composed of at least EIF4A, EIF4E and EIF4G.

The catalysed reaction is ATP + H2O = ADP + phosphate + H(+). Functionally, ATP-dependent RNA helicase which is a subunit of the eIF4F complex involved in cap recognition and is required for mRNA binding to ribosome. In the current model of translation initiation, eIF4A unwinds RNA secondary structures in the 5'-UTR of mRNAs which is necessary to allow efficient binding of the small ribosomal subunit, and subsequent scanning for the initiator codon. This is Eukaryotic initiation factor 4A-11 from Nicotiana tabacum (Common tobacco).